Consider the following 351-residue polypeptide: MNVKEHVISLPRRVFVGHDIIYDISIYFSQLGITSPFLIVTGTKYTKKIADRVIENLPKNAKYEVIEIDTATLDDVYKVEEVVKKVNPNILLGIGGGKVIDVTKYAAFRNNLEFVSIPTSPSHDGITSPFASIKGLQKPVSVKAKEPLAIIVDIEILSLSPRRLINAGIGDTIGKIIAVRDWRLAAKLRGEYYGDYTASLALMSAKHAFQCTKIINKDIKYGVRMLIEALISSGVAMGMAGSTRPASGSEHLFAHAVELLHPEGVLHGELVGLGTIIMAYLHGINWKIIRDRLKKIGFPVKAKDLGLSDEEVIKALTIAHTIRPERYTILGDRGLTWSSAEKIARVTKIID.

Residues 97–101 and 119–122 each bind NAD(+); these read GKVID and TSPS. Aspartate 124 lines the substrate pocket. Serine 128 contacts NAD(+). Substrate is bound at residue aspartate 171. Residues aspartate 171 and histidine 251 each coordinate Zn(2+). Histidine 255 contacts substrate. Residue histidine 267 coordinates Zn(2+).

This sequence belongs to the glycerol-1-phosphate dehydrogenase family. As to quaternary structure, homodimer. It depends on Zn(2+) as a cofactor.

The protein resides in the cytoplasm. The catalysed reaction is sn-glycerol 1-phosphate + NAD(+) = dihydroxyacetone phosphate + NADH + H(+). The enzyme catalyses sn-glycerol 1-phosphate + NADP(+) = dihydroxyacetone phosphate + NADPH + H(+). It functions in the pathway membrane lipid metabolism; glycerophospholipid metabolism. Functionally, catalyzes the NAD(P)H-dependent reduction of dihydroxyacetonephosphate (DHAP or glycerone phosphate) to glycerol 1-phosphate (G1P). The G1P thus generated is used as the glycerophosphate backbone of phospholipids in the cellular membranes of Archaea. This is Glycerol-1-phosphate dehydrogenase [NAD(P)+] from Saccharolobus islandicus (strain L.S.2.15 / Lassen #1) (Sulfolobus islandicus).